A 297-amino-acid polypeptide reads, in one-letter code: Acetylglutamate kinase (297 aa).

Substrate-binding positions include 70 to 71 (GG), Arg92, and Asn194.

It belongs to the acetylglutamate kinase family. ArgB subfamily.

Its subcellular location is the cytoplasm. It carries out the reaction N-acetyl-L-glutamate + ATP = N-acetyl-L-glutamyl 5-phosphate + ADP. The protein operates within amino-acid biosynthesis; L-arginine biosynthesis; N(2)-acetyl-L-ornithine from L-glutamate: step 2/4. Its function is as follows. Catalyzes the ATP-dependent phosphorylation of N-acetyl-L-glutamate. The sequence is that of Acetylglutamate kinase from Herminiimonas arsenicoxydans.